A 499-amino-acid chain; its full sequence is NADH-quinone oxidoreductase subunit N (499 aa).

Transmembrane regions (helical) follow at residues 16–36 (AAFSMSVVGGVGLAMIVLDAF), 42–62 (AIPWLGVAALGVSAVWEITHL), 77–97 (GGFVAFINLIILLTGLATILL), 109–129 (YGEVYALIMFCTVGMIMLGSA), 133–153 (VSIFLGLETMSVCLYVLTGFI), 167–187 (FLLGAFSTGFFLYGIALMYGA), 208–228 (LLFWGGFALFLVGFFFKVSAA), 252–272 (ATKAAAFAALILVLVHAVPGG), 274–294 (WQLSVAAVAVLTMVIGNVMAL), 302–322 (LLAYSSIAHAGYLLVGLSAGT), 327–347 (AGALFYLLVYAVMNIGAFGVM), 376–396 (GSTMGVFMLSLIGFPPLGGFI), 411–433 (TWLVVIGVLMSALSAYYYLRVVY), and 463–483 (GTLVVCAVALVVLGVFFGGVL).

It belongs to the complex I subunit 2 family. In terms of assembly, NDH-1 is composed of 14 different subunits. Subunits NuoA, H, J, K, L, M, N constitute the membrane sector of the complex.

The protein localises to the cell inner membrane. It catalyses the reaction a quinone + NADH + 5 H(+)(in) = a quinol + NAD(+) + 4 H(+)(out). Its function is as follows. NDH-1 shuttles electrons from NADH, via FMN and iron-sulfur (Fe-S) centers, to quinones in the respiratory chain. The immediate electron acceptor for the enzyme in this species is believed to be a menaquinone. Couples the redox reaction to proton translocation (for every two electrons transferred, four hydrogen ions are translocated across the cytoplasmic membrane), and thus conserves the redox energy in a proton gradient. The chain is NADH-quinone oxidoreductase subunit N from Salinibacter ruber (strain DSM 13855 / M31).